Reading from the N-terminus, the 1110-residue chain is Ribosome assembly protein 1 (1110 aa).

Positions 17–262 (SCIRNICIVA…QKLGAKRENL (246 aa)) constitute a tr-type G domain. GTP contacts are provided by residues 26–33 (AHVDHGKT), 102–106 (DSPGH), and 156–159 (NKID). Phosphoserine is present on Ser431.

It belongs to the TRAFAC class translation factor GTPase superfamily. Classic translation factor GTPase family.

It localises to the cytoplasm. The enzyme catalyses GTP + H2O = GDP + phosphate + H(+). With respect to regulation, GTPase activity is stimulated in the presence of 60S subunits. Its function is as follows. GTPase involved in the biogenesis of the 60S ribosomal subunit and translational activation of ribosomes. Together with SDO1, may trigger the GTP-dependent release of TIF6 from 60S pre-ribosomes in the cytoplasm, thereby activating ribosomes for translation competence by allowing 80S ribosome assembly and facilitating TIF6 recycling to the nucleus, where it is required for 60S rRNA processing and nuclear export. Inhibits GTPase activity of ribosome-bound EF-2. This chain is Ribosome assembly protein 1 (RIA1), found in Saccharomyces cerevisiae (strain ATCC 204508 / S288c) (Baker's yeast).